The sequence spans 427 residues: Cysteate synthase (427 aa).

Position 104 is an N6-(pyridoxal phosphate)lysine (Lys-104). Asn-130 and Thr-382 together coordinate pyridoxal 5'-phosphate.

Belongs to the threonine synthase family. Cysteate synthase subfamily. As to quaternary structure, homotrimer. The cofactor is pyridoxal 5'-phosphate.

It catalyses the reaction O-phospho-L-serine + sulfite + H(+) = L-cysteate + phosphate. The protein operates within cofactor biosynthesis; coenzyme M biosynthesis. Its function is as follows. Specifically catalyzes the beta-elimination of phosphate from L-phosphoserine and the beta-addition of sulfite to the dehydroalanine intermediate to produce L-cysteate. This is Cysteate synthase from Methanocella paludicola (strain DSM 17711 / JCM 13418 / NBRC 101707 / SANAE).